The primary structure comprises 105 residues: Nitrogen fixation nifHD region GlnB-like protein 1 (105 aa).

This sequence belongs to the P(II) protein family.

Could be involved in the regulation of nitrogen fixation. This chain is Nitrogen fixation nifHD region GlnB-like protein 1 (glnBA), found in Methanobacterium ivanovii.